We begin with the raw amino-acid sequence, 241 residues long: N-acetylmuramoyl-L-alanine amidase Rv3717 (241 aa).

An N-terminal signal peptide occupies residues 1–24; the sequence is MIVGVLVAAATPIISSASATPANI. Residues 29-230 form the MurNAc-LAA domain; it reads VFIDPGHNGA…KYANALVRGV (202 aa). Position 35 (His35) interacts with Zn(2+). The segment at 45 to 69 is disordered; sequence RQVPTGRGGTKNCQASGTSTNSGYP. Polar residues predominate over residues 55–67; it reads KNCQASGTSTNSG. A disulfide bond links Cys57 and Cys105. Zn(2+) contacts are provided by Glu70 and His125. Glu200 acts as the Proton donor/acceptor in catalysis.

It belongs to the N-acetylmuramoyl-L-alanine amidase 3 family. As to quaternary structure, monomer. Zn(2+) serves as cofactor.

The protein resides in the periplasm. It catalyses the reaction Hydrolyzes the link between N-acetylmuramoyl residues and L-amino acid residues in certain cell-wall glycopeptides.. The protein operates within cell wall degradation; peptidoglycan degradation. The structure reveals a short flexible hairpin turn that partially occludes the active site and may be involved in autoregulation. Functionally, cell-wall hydrolase that hydrolyzes the amide bond between N-acetylmuramic acid and L-alanine in cell-wall glycopeptides. Is able to hydrolyze the cell walls of several bacterial species (i.e. Paenibacillus sp., B.avium, E.coli DH5alpha, E.aerogenes, L.acidophilus, B.thuringiensis, B.pumilus, B.subtilis and E.coli W3110), thereby showing that it is a cell-wall hydrolase with broad-spectrum activity. May have a role in peptidoglycan fragment recycling. This is N-acetylmuramoyl-L-alanine amidase Rv3717 from Mycobacterium tuberculosis (strain ATCC 25618 / H37Rv).